Reading from the N-terminus, the 246-residue chain is Phosphomannomutase 2 (246 aa).

N-acetylalanine is present on Ala-2. Asp-12 acts as the Nucleophile in catalysis. Mg(2+) contacts are provided by Asp-12 and Asp-14. Residue Asp-14 is the Proton donor/acceptor of the active site. Arg-21, Arg-123, Arg-134, Arg-141, Ser-179, and Asp-181 together coordinate alpha-D-mannose 1-phosphate. Asp-209, Phe-221, Asp-223, and Thr-226 together coordinate Mg(2+).

The protein belongs to the eukaryotic PMM family. As to quaternary structure, homodimer.

The protein localises to the cytoplasm. The enzyme catalyses alpha-D-mannose 1-phosphate = D-mannose 6-phosphate. It participates in nucleotide-sugar biosynthesis; GDP-alpha-D-mannose biosynthesis; alpha-D-mannose 1-phosphate from D-fructose 6-phosphate: step 2/2. In terms of biological role, involved in the synthesis of the GDP-mannose and dolichol-phosphate-mannose required for a number of critical mannosyl transfer reactions. This Bos taurus (Bovine) protein is Phosphomannomutase 2 (PMM2).